Consider the following 147-residue polypeptide: Ribonuclease H (147 aa).

The 142-residue stretch at 1-142 folds into the RNase H type-1 domain; the sequence is MKKVSIYTDG…CDKLATDEIK (142 aa). 4 residues coordinate Mg(2+): aspartate 9, glutamate 47, aspartate 69, and aspartate 134.

The protein belongs to the RNase H family. In terms of assembly, monomer. Mg(2+) is required as a cofactor.

The protein localises to the cytoplasm. It carries out the reaction Endonucleolytic cleavage to 5'-phosphomonoester.. Endonuclease that specifically degrades the RNA of RNA-DNA hybrids. The polypeptide is Ribonuclease H (Acetivibrio thermocellus (strain ATCC 27405 / DSM 1237 / JCM 9322 / NBRC 103400 / NCIMB 10682 / NRRL B-4536 / VPI 7372) (Clostridium thermocellum)).